Reading from the N-terminus, the 251-residue chain is uncharacterized protein (251 aa).

Belongs to the FAM243 family.

This is an uncharacterized protein from Bos taurus (Bovine).